The primary structure comprises 308 residues: F-actin-capping protein subunit alpha (308 aa).

This sequence belongs to the F-actin-capping protein alpha subunit family. In terms of assembly, component of the F-actin capping complex, composed of a heterodimer of an alpha and a beta subunit.

Its function is as follows. F-actin-capping proteins bind in a Ca(2+)-independent manner to the fast growing ends of actin filaments (barbed end) thereby blocking the exchange of subunits at these ends. Unlike other capping proteins (such as gelsolin and severin), these proteins do not sever actin filaments. The protein is F-actin-capping protein subunit alpha of Arabidopsis thaliana (Mouse-ear cress).